The following is a 494-amino-acid chain: Neuronal acetylcholine receptor subunit alpha-6 (494 aa).

Residues 1-25 form the signal peptide; that stretch reads MLTSKGQGFLHGGLCLWLCVFTPFF. The Extracellular portion of the chain corresponds to 26–239; that stretch reads KGCVGCATEE…ITYSFYIRRL (214 aa). Asn54 and Asn171 each carry an N-linked (GlcNAc...) asparagine glycan. Disulfide bonds link Cys158–Cys172 and Cys222–Cys223. A run of 3 helical transmembrane segments spans residues 240 to 264, 272 to 290, and 306 to 327; these read PMFY…VFYL, VTLC…LVIT, and YLLF…VLNI. Topologically, residues 328–465 are cytoplasmic; the sequence is HYRTPTTHTM…WKYVAMVVDR (138 aa). Ser401 carries the phosphoserine modification. Residues 466–484 form a helical membrane-spanning segment; sequence VFLWVFIIVCVFGTAGLFL.

Belongs to the ligand-gated ion channel (TC 1.A.9) family. Acetylcholine receptor (TC 1.A.9.1) subfamily. Alpha-6/CHRNA6 sub-subfamily. Neuronal AChR is composed of two different types of subunits: alpha and non-alpha (beta). CHRNA6/alpha-6 subunit can be combined to CHRNB2/beta-2, CHRNA4/alpha-4 and CHRNB3/beta-3 to give rise to functional receptors. Heteropentamers containing CHRNB3 have an stoichiometry of (CHRNA6:CHRNB2)2:CHRNB3. Interacts with LYPD6.

It localises to the synaptic cell membrane. It carries out the reaction Ca(2+)(in) = Ca(2+)(out). The catalysed reaction is K(+)(in) = K(+)(out). It catalyses the reaction Na(+)(in) = Na(+)(out). Activated by a myriad of ligands such as acetylcholine, cytisine and nicotine. CHRNA6 nAChR activity is inhibited by the antagonists alpha-conotoxin MII and PIA, a small disulfide-constrained peptides from cone snails. Functionally, component of neuronal acetylcholine receptors (nAChRs) that function as pentameric, ligand-gated cation channels with high calcium permeability among other activities. nAChRs are excitatory neurotrasnmitter receptors formed by a collection of nAChR subunits known to mediate synaptic transmission in the nervous system and the neuromuscular junction. Each nAchR subunit confers differential attributes to channel properties, including activation, deactivation and desensitization kinetics, pH sensitivity, cation permeability, and binding to allosteric modulators. CHRNA6 forms pentameric channels with CHRNB2, CHRNB3 and CHRNA4 that exhibit high sensitivity to ACh and nicotine and are predominantly expressed in only a few brain areas, including dopaminergic neurons, norepirephrine neurons and cells of the visual system. nAChrs containing CHRNA6 subunits mediate endogenous cholinergic modulation of dopamine and gamma-aminobutyric acid (GABA) release in response to nicotine at nerve terminals. This is Neuronal acetylcholine receptor subunit alpha-6 from Homo sapiens (Human).